Consider the following 567-residue polypeptide: DNA ligase B (567 aa).

The active-site N6-AMP-lysine intermediate is the lysine 132.

Belongs to the NAD-dependent DNA ligase family. LigB subfamily.

It carries out the reaction NAD(+) + (deoxyribonucleotide)n-3'-hydroxyl + 5'-phospho-(deoxyribonucleotide)m = (deoxyribonucleotide)n+m + AMP + beta-nicotinamide D-nucleotide.. Catalyzes the formation of phosphodiester linkages between 5'-phosphoryl and 3'-hydroxyl groups in double-stranded DNA using NAD as a coenzyme and as the energy source for the reaction. This is DNA ligase B from Yersinia pestis.